The chain runs to 202 residues: MPPKTKGKGRKAATRKKKKNSSPGVEAEAKHRLVLLEKELLQDHLALQREEACRAKASEDRLKQRLQGLEAELERTQSEGRAVYAEMSRQRQALQKELGTRSKRLEEEVRGLRERLETCQREAKTAREEAERALREQDGTLTELRAHVAHMEAKYEEILHDNLNCLLAKLRAVKPQWDAATLRLHTRHKEQLRRFGLNPLDL.

Basic residues predominate over residues 1–20 (MPPKTKGKGRKAATRKKKKN). The tract at residues 1-29 (MPPKTKGKGRKAATRKKKKNSSPGVEAEA) is disordered. Positions 54 to 149 (RAKASEDRLK…TLTELRAHVA (96 aa)) form a coiled coil.

The protein belongs to the DRC12 family. Component of the nexin-dynein regulatory complex (N-DRC).

It is found in the cytoplasm. The protein localises to the cytoskeleton. It localises to the flagellum axoneme. Functionally, component of the nexin-dynein regulatory complex (N-DRC), a key regulator of ciliary/flagellar motility which maintains the alignment and integrity of the distal axoneme and regulates microtubule sliding in motile axonemes. In Rattus norvegicus (Rat), this protein is Dynein regulatory complex protein 12 (Drc12).